A 119-amino-acid chain; its full sequence is Large ribosomal subunit protein uL24 (119 aa).

It belongs to the universal ribosomal protein uL24 family. As to quaternary structure, part of the 50S ribosomal subunit.

In terms of biological role, one of two assembly initiator proteins, it binds directly to the 5'-end of the 23S rRNA, where it nucleates assembly of the 50S subunit. Located at the polypeptide exit tunnel on the outside of the subunit. The sequence is that of Large ribosomal subunit protein uL24 from Methanosarcina acetivorans (strain ATCC 35395 / DSM 2834 / JCM 12185 / C2A).